A 255-amino-acid polypeptide reads, in one-letter code: Type III pantothenate kinase (255 aa).

Residue 7-14 coordinates ATP; sequence DVGNTRLK. Residues Tyr-96 and 103–106 contribute to the substrate site; that span reads GADR. The active-site Proton acceptor is Asp-105. Thr-133 is a binding site for ATP. Substrate is bound at residue Thr-183.

The protein belongs to the type III pantothenate kinase family. As to quaternary structure, homodimer. Requires NH4(+) as cofactor. The cofactor is K(+).

The protein localises to the cytoplasm. The catalysed reaction is (R)-pantothenate + ATP = (R)-4'-phosphopantothenate + ADP + H(+). The protein operates within cofactor biosynthesis; coenzyme A biosynthesis; CoA from (R)-pantothenate: step 1/5. Functionally, catalyzes the phosphorylation of pantothenate (Pan), the first step in CoA biosynthesis. The protein is Type III pantothenate kinase of Polaromonas sp. (strain JS666 / ATCC BAA-500).